A 102-amino-acid chain; its full sequence is Small ribosomal subunit protein uS10 (102 aa).

Belongs to the universal ribosomal protein uS10 family. In terms of assembly, part of the 30S ribosomal subunit.

Functionally, involved in the binding of tRNA to the ribosomes. In Methanocorpusculum labreanum (strain ATCC 43576 / DSM 4855 / Z), this protein is Small ribosomal subunit protein uS10.